The following is a 185-amino-acid chain: Transcriptional repressor NrdR (185 aa).

Residues 1–24 (MRCPFCGGPDTQVKDSRPSEDSSA) are disordered. Residues 3 to 34 (CPFCGGPDTQVKDSRPSEDSSAIRRRRVCPDC) fold into a zinc finger. Residues 12–24 (QVKDSRPSEDSSA) are compositionally biased toward basic and acidic residues. The ATP-cone domain maps to 49–139 (LVVLKRSGKR…VYKNFREAQD (91 aa)). A disordered region spans residues 149-185 (ERLEGEGDLPEDGEAAPAPPDEVVAAPRRGRPARKRA). Residues 176–185 (RRGRPARKRA) show a composition bias toward basic residues.

The protein belongs to the NrdR family. Zn(2+) serves as cofactor.

Its function is as follows. Negatively regulates transcription of bacterial ribonucleotide reductase nrd genes and operons by binding to NrdR-boxes. The protein is Transcriptional repressor NrdR of Methylorubrum extorquens (strain PA1) (Methylobacterium extorquens).